Consider the following 325-residue polypeptide: Interferon regulatory factor 1 (325 aa).

A DNA-binding region (IRF tryptophan pentad repeat) is located at residues 5–113 (RMRMRPWLEM…SAVRVYRMLP (109 aa)). N6-acetyllysine is present on lysine 78. Residues 92–165 (EEVKDQSRNK…TLPDDHSSYT (74 aa)) are disordered. The span at 141-157 (GDSSPDTFSDGLSSSTL) shows a compositional bias: polar residues. Glycyl lysine isopeptide (Lys-Gly) (interchain with G-Cter in SUMO) cross-links involve residues lysine 275 and lysine 299.

This sequence belongs to the IRF family. Monomer. Homodimer. Interacts with EP300. Interacts with MYD88. Interacts with PIAS3. Interacts with SPOP. Post-translationally, phosphorylated by CK2 and this positively regulates its activity. Sumoylation represses the transcriptional activity and displays enhanced resistance to protein degradation. Sumoylated by UBE2I/UBC9 and SUMO1. Inactivates the tumor suppressor activity. Elevated levels in tumor cells. Major site is Lys-275. Sumoylation is enhanced by PIAS3. Desumoylated by SENP1 in tumor cells and appears to compete with ubiquitination on C-terminal sites. In terms of processing, ubiquitinated in a SPOP-depedent manner. Appears to compete with sumoylation on C-terminal sites.

Its subcellular location is the nucleus. It localises to the cytoplasm. Activated by MYD88. Functionally, transcriptional regulator which displays a remarkable functional diversity in the regulation of cellular responses. Regulates transcription of IFN and IFN-inducible genes, host response to viral and bacterial infections, regulation of many genes expressed during hematopoiesis, inflammation, immune responses and cell proliferation and differentiation, regulation of the cell cycle and induction of growth arrest and programmed cell death following DNA damage. Stimulates both innate and acquired immune responses through the activation of specific target genes and can act as a transcriptional activator and repressor regulating target genes by binding to an interferon-stimulated response element (ISRE) in their promoters. Has an essentail role in IFNG-dependent immunity to mycobacteria. Competes with the transcriptional repressor ZBED2 for binding to a common consensus sequence in gene promoters. Its target genes for transcriptional activation activity include: genes involved in anti-viral response, such as IFN-alpha/beta, RIGI, TNFSF10/TRAIL, ZBP1, OAS1/2, PIAS1/GBP, EIF2AK2/PKR and RSAD2/viperin; antibacterial response, such as GBP2, GBP5 and NOS2/INOS; anti-proliferative response, such as p53/TP53, LOX and CDKN1A; apoptosis, such as BBC3/PUMA, CASP1, CASP7 and CASP8; immune response, such as IL7, IL12A/B and IL15, PTGS2/COX2 and CYBB; DNA damage responses and DNA repair, such as POLQ/POLH; MHC class I expression, such as TAP1, PSMB9/LMP2, PSME1/PA28A, PSME2/PA28B and B2M and MHC class II expression, such as CIITA; metabolic enzymes, such as ACOD1/IRG1. Represses genes involved in anti-proliferative response, such as BIRC5/survivin, CCNB1, CCNE1, CDK1, CDK2 and CDK4 and in immune response, such as FOXP3, IL4, ANXA2 and TLR4. Stimulates p53/TP53-dependent transcription through enhanced recruitment of EP300 leading to increased acetylation of p53/TP53. Plays an important role in immune response directly affecting NK maturation and activity, macrophage production of IL12, Th1 development and maturation of CD8+ T-cells. Also implicated in the differentiation and maturation of dendritic cells and in the suppression of regulatory T (Treg) cells development. Acts as a tumor suppressor and plays a role not only in antagonism of tumor cell growth but also in stimulating an immune response against tumor cells. This chain is Interferon regulatory factor 1 (IRF1), found in Homo sapiens (Human).